A 427-amino-acid chain; its full sequence is MNTESVVEFLGNVPLLQKLPSSSLKKIAQVVVPKRYGKGDYVVREDQTWDGCYFILQGEAQVSGPDEEDNRSEFLLKQYDYFGVGLSGNVHSADIVAMSQLTCLVLPRDHCHLLETNSIWQSDTSLDKCSLVERILQLDPLELNIFRGITLPDAPIFGKVFGGQFVGQALAAASKTVDFLKVVHSLHSYFLLVGDIDIPIIYQVHRIRDGNNFATRRVDAVQKGNIIFILLASFQKEQQGFEHQESTMPSVPDPDTLLSLEELRESRITDPHLPRSYRNKVATRNFVPWPIEIRFCEPSNSTNQTKSPPRLNYWFRAKGRLSDDQALHRCVVAFASDLIFCGVGLNPHRRKGVKSAALSLDHAMWFHRPLRADEWLLYVIVSPTAHETRGFVTGQMFNRKGELVVSLTQEALLREARPPKPSGTSKL.

15–83 (LLQKLPSSSL…FLLKQYDYFG (69 aa)) lines the a nucleoside 3',5'-cyclic phosphate pocket. Catalysis depends on charge relay system residues Asp-337, Ser-359, and Gln-409. Residues 425–427 (SKL) carry the Microbody targeting signal motif.

It belongs to the C/M/P thioester hydrolase family. As to quaternary structure, homotetramer. In terms of tissue distribution, mostly expressed in leaves and flowers, and, to a lower extent, in seedlings and siliques.

It localises to the peroxisome matrix. The enzyme catalyses a fatty acyl-CoA + H2O = a fatty acid + CoA + H(+). The catalysed reaction is dodecanoyl-CoA + H2O = dodecanoate + CoA + H(+). It catalyses the reaction tetradecanoyl-CoA + H2O = tetradecanoate + CoA + H(+). It carries out the reaction octadecanoyl-CoA + H2O = octadecanoate + CoA + H(+). The enzyme catalyses (9Z)-hexadecenoyl-CoA + H2O = (9Z)-hexadecenoate + CoA + H(+). The catalysed reaction is (5Z,8Z,11Z,14Z)-eicosatetraenoyl-CoA + H2O = (5Z,8Z,11Z,14Z)-eicosatetraenoate + CoA + H(+). It catalyses the reaction hexadecanoyl-CoA + H2O = hexadecanoate + CoA + H(+). It carries out the reaction (9Z)-octadecenoyl-CoA + H2O = (9Z)-octadecenoate + CoA + H(+). The enzyme catalyses (9Z,12Z)-octadecadienoyl-CoA + H2O = (9Z,12Z)-octadecadienoate + CoA + H(+). It functions in the pathway lipid metabolism; fatty acid metabolism. Insensitive to feedback inhibition by free coenzyme A (CoASH). Functionally, catalyzes the hydrolysis of acyl-CoAs into free fatty acids and coenzyme A (CoASH), regulating their respective intracellular levels. Active with both medium chain and long chain acyl-CoAs (e.g. 12:0-CoA, 14:0-CoA, 16:0-CoA, 18:0-CoA, 16:1-CoA, 18:1-CoA, 18:2-CoA and 20:4-CoA) as substrates, palmitoleoyl-CoA (16:1-CoA) being the favorite substrate. This chain is Acyl-CoA hydrolase 2, found in Arabidopsis thaliana (Mouse-ear cress).